The primary structure comprises 334 residues: MIEADRLIQPQLQGQDDVIDRAMRPKLLDEYTGQDDTRAQLKVFIQAAKNREEALDHMLIYGPPGLGKTTLAMIVANEMGVNIKSTSGPVLEKAGDLAALLTNLEAGDVLFIDEIHRLSPVVEEILYPAMEDYQLDIMIGEGPAARSIKLDLPPFTLVGATTRAGALTSPLRARFGIPLRLEFYNVKDLSTIVSRSAQVMGLAIDSEGAIEIAKRSRGTPRIANRLLRRVRDYAEVKHDGAVTKKVAEHALDLLDVDGEGFDYMDRKLLLAIIDKFMGGPVGLDNLAAAIGEERETIEDVLEPFLIQQGFIQRTPRGRIATNRAYLHFGMIKPE.

Residues 4–184 (ADRLIQPQLQ…FGIPLRLEFY (181 aa)) are large ATPase domain (RuvB-L). ATP is bound by residues Arg-24, Gly-65, Lys-68, Thr-69, Thr-70, 131-133 (EDY), Arg-174, Tyr-184, and Arg-221. Residue Thr-69 coordinates Mg(2+). A small ATPAse domain (RuvB-S) region spans residues 185–255 (NVKDLSTIVS…VAEHALDLLD (71 aa)). Residues 258–334 (GEGFDYMDRK…YLHFGMIKPE (77 aa)) form a head domain (RuvB-H) region. DNA-binding residues include Arg-294, Arg-313, and Arg-318.

It belongs to the RuvB family. Homohexamer. Forms an RuvA(8)-RuvB(12)-Holliday junction (HJ) complex. HJ DNA is sandwiched between 2 RuvA tetramers; dsDNA enters through RuvA and exits via RuvB. An RuvB hexamer assembles on each DNA strand where it exits the tetramer. Each RuvB hexamer is contacted by two RuvA subunits (via domain III) on 2 adjacent RuvB subunits; this complex drives branch migration. In the full resolvosome a probable DNA-RuvA(4)-RuvB(12)-RuvC(2) complex forms which resolves the HJ.

The protein resides in the cytoplasm. It catalyses the reaction ATP + H2O = ADP + phosphate + H(+). Functionally, the RuvA-RuvB-RuvC complex processes Holliday junction (HJ) DNA during genetic recombination and DNA repair, while the RuvA-RuvB complex plays an important role in the rescue of blocked DNA replication forks via replication fork reversal (RFR). RuvA specifically binds to HJ cruciform DNA, conferring on it an open structure. The RuvB hexamer acts as an ATP-dependent pump, pulling dsDNA into and through the RuvAB complex. RuvB forms 2 homohexamers on either side of HJ DNA bound by 1 or 2 RuvA tetramers; 4 subunits per hexamer contact DNA at a time. Coordinated motions by a converter formed by DNA-disengaged RuvB subunits stimulates ATP hydrolysis and nucleotide exchange. Immobilization of the converter enables RuvB to convert the ATP-contained energy into a lever motion, pulling 2 nucleotides of DNA out of the RuvA tetramer per ATP hydrolyzed, thus driving DNA branch migration. The RuvB motors rotate together with the DNA substrate, which together with the progressing nucleotide cycle form the mechanistic basis for DNA recombination by continuous HJ branch migration. Branch migration allows RuvC to scan DNA until it finds its consensus sequence, where it cleaves and resolves cruciform DNA. This is Holliday junction branch migration complex subunit RuvB from Shewanella sp. (strain MR-7).